Consider the following 308-residue polypeptide: Spermidine synthase 1 (308 aa).

Residues 17 to 254 (PGWFSEISPL…GVIGFMLCST (238 aa)) enclose the PABS domain. Gln48 provides a ligand contact to S-adenosyl 3-(methylsulfanyl)propylamine. Tyr78 lines the putrescine pocket. Residues Gln79, Asp103, Glu123, 154 to 155 (DG), and Asp173 each bind S-adenosyl 3-(methylsulfanyl)propylamine. Asp173 acts as the Proton acceptor in catalysis. Putrescine contacts are provided by residues 173–176 (DSSD) and Tyr242.

Belongs to the spermidine/spermine synthase family.

It catalyses the reaction S-adenosyl 3-(methylsulfanyl)propylamine + putrescine = S-methyl-5'-thioadenosine + spermidine + H(+). Its pathway is amine and polyamine biosynthesis; spermidine biosynthesis; spermidine from putrescine: step 1/1. The sequence is that of Spermidine synthase 1 from Datura stramonium (Jimsonweed).